The sequence spans 1544 residues: Arf-GAP with Rho-GAP domain, ANK repeat and PH domain-containing protein 3 (1544 aa).

The region spanning 4–68 (PQDLDIAVWL…LRLLQTGTEE (65 aa)) is the SAM domain. Disordered stretches follow at residues 64–147 (TGTE…EQSS) and 167–194 (GRAQ…PTTG). 2 stretches are compositionally biased toward pro residues: residues 82–97 (SPSP…PVPK) and 130–139 (EPSPRPPPLP). 2 consecutive PH domains span residues 287 to 379 (TPLL…SCLK) and 394 to 483 (RPLR…EAVT). The Arf-GAP domain maps to 480-611 (EAVTETLSDY…LFRKPHPQYP (132 aa)). The C4-type zinc finger occupies 504-527 (CADCGSSRPDWAAVNLGVVICKQC). The 182-residue stretch at 907–1088 (TGLQEQQMSR…ELIDGYISVF (182 aa)) folds into the Rho-GAP domain. The 94-residue stretch at 1117–1210 (GDLIMEVYIE…ASLLLKKVPL (94 aa)) folds into the Ras-associating domain. Residues 1223–1325 (ESPRVGLLRC…WTTSILKAQH (103 aa)) form the PH 3 domain. Thr1348 is modified (phosphothreonine). 2 positions are modified to phosphotyrosine: Tyr1403 and Tyr1408. Positions 1422–1544 (STSFSTTREW…SSPPSSQPLT (123 aa)) are disordered. The span at 1438–1457 (PLTSQKSLDQPFLSKSSTLG) shows a compositional bias: polar residues. Residues Ser1444 and Ser1480 each carry the phosphoserine modification. Composition is skewed to low complexity over residues 1482–1492 (EEQLLQELSSL) and 1502–1527 (GLGS…TPGF).

As to quaternary structure, interacts (via SAM domain) with INPPL1/SHIP2. Tyrosine phosphorylated at a low basal level. PDGF treatment stimulates phosphorylation. Tyrosine phosphorylation is increased in cells that are in the process of becoming attached to a substrate and that start spreading and flattening.

The protein resides in the cytoplasm. It is found in the cytoskeleton. Its subcellular location is the cell membrane. It localises to the cell projection. The protein localises to the lamellipodium. The protein resides in the ruffle. Functionally, phosphatidylinositol 3,4,5-trisphosphate-dependent GTPase-activating protein that modulates actin cytoskeleton remodeling by regulating ARF and RHO family members. Is activated by phosphatidylinositol 3,4,5-trisphosphate (PtdIns(3,4,5)P3) binding. Can be activated by phosphatidylinositol 3,4-bisphosphate (PtdIns(3,4,5)P2) binding, albeit with lower efficiency. Acts on ARF6, RAC1, RHOA and CDC42. Plays a role in the internalization of anthrax toxin. The chain is Arf-GAP with Rho-GAP domain, ANK repeat and PH domain-containing protein 3 (ARAP3) from Homo sapiens (Human).